A 119-amino-acid polypeptide reads, in one-letter code: ATP-dependent Clp protease adapter protein ClpS (119 aa).

This sequence belongs to the ClpS family. As to quaternary structure, binds to the N-terminal domain of the chaperone ClpA.

In terms of biological role, involved in the modulation of the specificity of the ClpAP-mediated ATP-dependent protein degradation. The polypeptide is ATP-dependent Clp protease adapter protein ClpS (Marinobacter nauticus (strain ATCC 700491 / DSM 11845 / VT8) (Marinobacter aquaeolei)).